We begin with the raw amino-acid sequence, 208 residues long: Large ribosomal subunit protein uL4 (208 aa).

A disordered region spans residues 47–84; the sequence is ARAARERSDVARTGKKFGRQKGGGTARHGDRRAPVFIG. Basic and acidic residues predominate over residues 49-58; sequence AARERSDVAR.

This sequence belongs to the universal ribosomal protein uL4 family. Part of the 50S ribosomal subunit.

One of the primary rRNA binding proteins, this protein initially binds near the 5'-end of the 23S rRNA. It is important during the early stages of 50S assembly. It makes multiple contacts with different domains of the 23S rRNA in the assembled 50S subunit and ribosome. Functionally, forms part of the polypeptide exit tunnel. In Rhizorhabdus wittichii (strain DSM 6014 / CCUG 31198 / JCM 15750 / NBRC 105917 / EY 4224 / RW1) (Sphingomonas wittichii), this protein is Large ribosomal subunit protein uL4.